We begin with the raw amino-acid sequence, 244 residues long: 5-oxoprolinase subunit A (244 aa).

The protein belongs to the LamB/PxpA family. In terms of assembly, forms a complex composed of PxpA, PxpB and PxpC.

It catalyses the reaction 5-oxo-L-proline + ATP + 2 H2O = L-glutamate + ADP + phosphate + H(+). In terms of biological role, catalyzes the cleavage of 5-oxoproline to form L-glutamate coupled to the hydrolysis of ATP to ADP and inorganic phosphate. In Salmonella choleraesuis (strain SC-B67), this protein is 5-oxoprolinase subunit A.